Reading from the N-terminus, the 172-residue chain is MKLGIVIFPSKMIQDKANGLRKRYDPHYALVPPHITLKTPFETQDEQLESIVNELHTIASKTNPFTLHVGKVGSFAPVNNVIYFKVEKTPELTFLNEEMHSGFFTQEREYAFVPHLTIGQGLSDAEHADVLGRLRMKDFYYEQPIDRFHLLYQLENGTWTVHETFRLGKGNN.

The active-site Proton donor is His34. 2 consecutive short sequence motifs (HXTX) follow at residues 34–37 (HITL) and 115–118 (HLTI). The active-site Proton acceptor is the His115.

It belongs to the 2H phosphoesterase superfamily. YjcG family.

This chain is Putative phosphoesterase BT9727_1129, found in Bacillus thuringiensis subsp. konkukian (strain 97-27).